The primary structure comprises 438 residues: MADYQDKNVVIIGLGLTGLSCVDFFLARGVTPRVMDTRVTPPGLDKLPQEVERHVGGLNDEWLLAADLIVASPGIALAHPSLSAAASAGVEIVGDIELFCREAQAPIVAITGSNGKSTVTTLVGEMAKAAGVNVGVGGNIGLPALMLLDADRELYVLELSSFQLETTSSLQAAAATVLNVTEDHMDRYPFGLQQYRAAKLRVYEKAKVCVVNADDALTMPVRGADERCVSFGVNMGDYHLNRQQGETWLRVKGEKVLNVKEMKLSGQHNYTNALAALALADAVGLPRASSLKALTTFTGLAHRFQLALEHNGVRWINDSKATNVGSTEAALNGLHVDGTLHLLLGGDGKSADFSPLTRYLTGDRIRLYCFGRDGAQLAALRPEIAQQTETMEEAMRLLAPRVQPGDMVLLSPACASLDQFKNFEQRGDVFTRLAKELG.

112–118 (GSNGKST) is a binding site for ATP.

It belongs to the MurCDEF family.

It is found in the cytoplasm. It catalyses the reaction UDP-N-acetyl-alpha-D-muramoyl-L-alanine + D-glutamate + ATP = UDP-N-acetyl-alpha-D-muramoyl-L-alanyl-D-glutamate + ADP + phosphate + H(+). The protein operates within cell wall biogenesis; peptidoglycan biosynthesis. Functionally, cell wall formation. Catalyzes the addition of glutamate to the nucleotide precursor UDP-N-acetylmuramoyl-L-alanine (UMA). The sequence is that of UDP-N-acetylmuramoylalanine--D-glutamate ligase from Salmonella typhimurium (strain LT2 / SGSC1412 / ATCC 700720).